Reading from the N-terminus, the 67-residue chain is Large ribosomal subunit protein uL29 (67 aa).

The protein belongs to the universal ribosomal protein uL29 family.

The protein is Large ribosomal subunit protein uL29 of Rubrobacter xylanophilus (strain DSM 9941 / JCM 11954 / NBRC 16129 / PRD-1).